The primary structure comprises 471 residues: Phosphatidylserine synthase 2 (471 aa).

The segment at 1–26 (MRRGERRVAGGSGSESPLLEGRRSTE) is disordered. Topologically, residues 1–40 (MRRGERRVAGGSGSESPLLEGRRSTESEVYDDGTNTFFWR) are cytoplasmic. 3 positions are modified to phosphoserine: serine 12, serine 14, and serine 16. Residues 41–61 (AHTLTVLFILTCALGYVTLLE) form a helical membrane-spanning segment. Topologically, residues 62–74 (ETPQDTAYNTKRG) are lumenal. Residues 75–95 (IVASILVFLCFGVTQAKDGPF) traverse the membrane as a helical segment. Over 96–104 (SRPHPAYWR) the chain is Cytoplasmic. The helical transmembrane segment at 105-125 (FWLCVSVVYELFLIFILFQTV) threads the bilayer. Topologically, residues 126–291 (HDGRQFLKYV…EWKPASSLHR (166 aa)) are lumenal. Asparagine 159 carries N-linked (GlcNAc...) asparagine glycosylation. Residues 292 to 312 (WLAVCGIILVFLLAELNTFYL) form a helical membrane-spanning segment. A topological domain (cytoplasmic) is located at residue lysine 313. Residues 314–334 (FVLWMPPEHYLVLLRLVFFVN) form a helical membrane-spanning segment. The Lumenal portion of the chain corresponds to 335 to 354 (VGGVAMREIYDFMDELKPHR). The chain crosses the membrane as a helical span at residues 355-375 (KLGQQAWLVAAITVTELLIVV). At 376–381 (KYDPHT) the chain is on the cytoplasmic side. A helical transmembrane segment spans residues 382-402 (LTLSLPFYISQCWTLGSILVL). Residues 403–471 (TWTVWRFFLR…PAEEGPSAAS (69 aa)) lie on the Lumenal side of the membrane. Residues 423 to 471 (RQKQQSHQAINNGDGHPGPEDDLPGTGTAEEEGTTNDGVPAEEGPSAAS) form a disordered region.

This sequence belongs to the phosphatidyl serine synthase family.

It is found in the endoplasmic reticulum membrane. The catalysed reaction is a 1,2-diacyl-sn-glycero-3-phosphoethanolamine + L-serine = a 1,2-diacyl-sn-glycero-3-phospho-L-serine + ethanolamine. The enzyme catalyses 1-hexadecanoyl-2-(9Z-octadecenoyl)-sn-glycero-3-phosphoethanolamine + L-serine = 1-hexadecanoyl-2-(9Z-octadecenoyl)-sn-glycero-3-phospho-L-serine + ethanolamine. It carries out the reaction 1-hexadecanoyl-2-(4Z,7Z,10Z,13Z,16Z,19Z-docosahexaenoyl)-sn-glycero-3-phosphoethanolamine + L-serine = 1-hexadecanoyl-2-(4Z,7Z,10Z,13Z,16Z,19Z-docosahexaenoyl)-sn-glycero-3-phosphoserine + ethanolamine. It catalyses the reaction 1-octadecanoyl-2-(5Z,8Z,11Z,14Z)-eicosatetraenoyl-sn-glycero-3-phosphoethanolamine + L-serine = 1-octadecanoyl-2-(5Z,8Z,11Z,14Z)-eicosatetraenoyl-sn-glycero-3-phosphoserine + ethanolamine. The catalysed reaction is 1-octadecanoyl-2-(4Z,7Z,10Z,13Z,16Z,19Z-docosahexaenoyl)-sn-glycero-3-phosphoethanolamine + L-serine = 1-octadecanoyl-2-(4Z,7Z,10Z,13Z,16Z,19Z-docosahexaenoyl)-sn-glycero-3-phosphoserine + ethanolamine. The enzyme catalyses 1-(1Z-octadecenyl)-2-(4Z,7Z,10Z,13Z,16Z,19Z-docosahexaenoyl)-sn-glycero-3-phosphoethanolamine + L-serine = 1-(1Z-octadecenyl)-2-(4Z,7Z,10Z,13Z,16Z,19Z-docosahexaenoyl)-sn-glycero-3-phospho-L-serine + ethanolamine. It carries out the reaction 1-octadecanoyl-2-(9Z-octadecenoyl)-sn-glycero-3-phosphoethanolamine + L-serine = 1-octadecanoyl-2-(9Z-octadecenoyl)-sn-glycero-3-phospho-L-serine + ethanolamine. It catalyses the reaction 1-(1Z-octadecenyl)-2-(9Z-octadecenoyl)-sn-glycero-3-phosphoethanolamine + L-serine = 1-(1Z-octadecenyl)-2-(9Z-octadecenoyl)-sn-glycero-3-phospho-L-serine + ethanolamine. The catalysed reaction is 1-(1Z-octadecenyl)-2-(5Z,8Z,11Z,14Z- eicosatetraenoyl)-sn-glycero-3-phosphoethanolamine + L-serine = 1-(1Z-octadecenyl)-2-(5Z,8Z,11Z,14Z-eicosatetraenoyl)-sn-glycero-3-phospho-L-serine + ethanolamine. The protein operates within phospholipid metabolism; phosphatidylserine biosynthesis. Catalyzes a base-exchange reaction in which the polar head group of phosphatidylethanolamine (PE) or phosphatidylcholine (PC) is replaced by L-serine. Catalyzes the conversion of phosphatatidylethanolamine and does not act on phosphatidylcholine. Can utilize both phosphatidylethanolamine (PE) plasmalogen and diacyl PE as substrate and the latter is six times better utilized, indicating the importance of an ester linkage at the sn-1 position. Although it shows no sn-1 fatty acyl preference, exhibits significant preference towards docosahexaenoic acid (22:6n-3) compared with 18:1 or 20:4 at the sn-2 position. The polypeptide is Phosphatidylserine synthase 2 (Ptdss2) (Rattus norvegicus (Rat)).